We begin with the raw amino-acid sequence, 351 residues long: Putative phospho-N-acetylmuramoyl-pentapeptide-transferase (351 aa).

10 consecutive transmembrane segments (helical) span residues Met-2 to Ile-22, Ala-44 to Leu-64, Leu-71 to Leu-91, Gly-158 to Gly-178, Gly-181 to Ile-201, Gly-212 to Ser-232, Ala-235 to Pro-255, Ile-258 to Leu-278, Thr-281 to Leu-301, and Ile-328 to Gly-348.

The protein belongs to the glycosyltransferase 4 family. MraY subfamily. Mg(2+) is required as a cofactor.

It is found in the cell membrane. The catalysed reaction is UDP-N-acetyl-alpha-D-muramoyl-L-alanyl-gamma-D-glutamyl-meso-2,6-diaminopimeloyl-D-alanyl-D-alanine + di-trans,octa-cis-undecaprenyl phosphate = di-trans,octa-cis-undecaprenyl diphospho-N-acetyl-alpha-D-muramoyl-L-alanyl-D-glutamyl-meso-2,6-diaminopimeloyl-D-alanyl-D-alanine + UMP. The sequence is that of Putative phospho-N-acetylmuramoyl-pentapeptide-transferase from Methanothermobacter thermautotrophicus (strain ATCC 29096 / DSM 1053 / JCM 10044 / NBRC 100330 / Delta H) (Methanobacterium thermoautotrophicum).